Here is a 127-residue protein sequence, read N- to C-terminus: MSRRNTDAITIHSILDWIEDNLESPLSLEKVSERSGYSKWHLQRMFKKETGHSLGQYIRSRKMTEIAQKLKESNEPILYLAERYGFESQQTLTRTFKNYFDVPPHKYRMTNMQGESRFLHPLNHYNS.

The 99-residue stretch at 12–110 (HSILDWIEDN…DVPPHKYRMT (99 aa)) folds into the HTH araC/xylS-type domain. 2 DNA-binding regions (H-T-H motif) span residues 29 to 50 (EKVS…KKET) and 77 to 100 (ILYL…KNYF).

Monomer.

In terms of biological role, may be a transcriptional activator of genes involved in the multiple antibiotic resistance (Mar) phenotype. It can also activate genes such as sodA, zwf and micF. In Escherichia coli (strain K12), this protein is Multiple antibiotic resistance protein MarA (marA).